We begin with the raw amino-acid sequence, 212 residues long: Phosphatidylserine decarboxylase proenzyme (212 aa).

Residue Ser-182 is the Schiff-base intermediate with substrate; via pyruvic acid of the active site. Pyruvic acid (Ser); by autocatalysis is present on Ser-182.

This sequence belongs to the phosphatidylserine decarboxylase family. PSD-A subfamily. Heterodimer of a large membrane-associated beta subunit and a small pyruvoyl-containing alpha subunit. Pyruvate serves as cofactor. Is synthesized initially as an inactive proenzyme. Formation of the active enzyme involves a self-maturation process in which the active site pyruvoyl group is generated from an internal serine residue via an autocatalytic post-translational modification. Two non-identical subunits are generated from the proenzyme in this reaction, and the pyruvate is formed at the N-terminus of the alpha chain, which is derived from the carboxyl end of the proenzyme. The post-translation cleavage follows an unusual pathway, termed non-hydrolytic serinolysis, in which the side chain hydroxyl group of the serine supplies its oxygen atom to form the C-terminus of the beta chain, while the remainder of the serine residue undergoes an oxidative deamination to produce ammonia and the pyruvoyl prosthetic group on the alpha chain.

It localises to the cell membrane. It catalyses the reaction a 1,2-diacyl-sn-glycero-3-phospho-L-serine + H(+) = a 1,2-diacyl-sn-glycero-3-phosphoethanolamine + CO2. Its pathway is phospholipid metabolism; phosphatidylethanolamine biosynthesis; phosphatidylethanolamine from CDP-diacylglycerol: step 2/2. Catalyzes the formation of phosphatidylethanolamine (PtdEtn) from phosphatidylserine (PtdSer). This Chlorobium chlorochromatii (strain CaD3) protein is Phosphatidylserine decarboxylase proenzyme.